The following is a 380-amino-acid chain: DNA replication and repair protein RecF (380 aa).

Position 30–37 (30–37) interacts with ATP; it reads GENAQGKT.

Belongs to the RecF family.

Its subcellular location is the cytoplasm. Its function is as follows. The RecF protein is involved in DNA metabolism; it is required for DNA replication and normal SOS inducibility. RecF binds preferentially to single-stranded, linear DNA. It also seems to bind ATP. The protein is DNA replication and repair protein RecF of Synechococcus sp. (strain JA-2-3B'a(2-13)) (Cyanobacteria bacterium Yellowstone B-Prime).